The following is a 426-amino-acid chain: Serine--tRNA ligase (426 aa).

233–235 contributes to the L-serine binding site; it reads TAE. Position 264–266 (264–266) interacts with ATP; it reads RSE. Glu-287 is a binding site for L-serine. 351–354 lines the ATP pocket; that stretch reads EISS. Ser-387 is a binding site for L-serine.

It belongs to the class-II aminoacyl-tRNA synthetase family. Type-1 seryl-tRNA synthetase subfamily. As to quaternary structure, homodimer. The tRNA molecule binds across the dimer.

The protein resides in the cytoplasm. The enzyme catalyses tRNA(Ser) + L-serine + ATP = L-seryl-tRNA(Ser) + AMP + diphosphate + H(+). It catalyses the reaction tRNA(Sec) + L-serine + ATP = L-seryl-tRNA(Sec) + AMP + diphosphate + H(+). The protein operates within aminoacyl-tRNA biosynthesis; selenocysteinyl-tRNA(Sec) biosynthesis; L-seryl-tRNA(Sec) from L-serine and tRNA(Sec): step 1/1. Functionally, catalyzes the attachment of serine to tRNA(Ser). Is also able to aminoacylate tRNA(Sec) with serine, to form the misacylated tRNA L-seryl-tRNA(Sec), which will be further converted into selenocysteinyl-tRNA(Sec). This chain is Serine--tRNA ligase, found in Pseudomonas savastanoi pv. phaseolicola (strain 1448A / Race 6) (Pseudomonas syringae pv. phaseolicola (strain 1448A / Race 6)).